Reading from the N-terminus, the 113-residue chain is uncharacterized protein (113 aa).

This is an uncharacterized protein from Mycoplasma pneumoniae (strain ATCC 29342 / M129 / Subtype 1) (Mycoplasmoides pneumoniae).